A 206-amino-acid polypeptide reads, in one-letter code: Putative archaetidylserine decarboxylase proenzyme (206 aa).

The Schiff-base intermediate with substrate; via pyruvic acid role is filled by Ser172. Ser172 is subject to Pyruvic acid (Ser); by autocatalysis.

This sequence belongs to the phosphatidylserine decarboxylase family. PSD-A subfamily. In terms of assembly, heterodimer of a large membrane-associated beta subunit and a small pyruvoyl-containing alpha subunit. The cofactor is pyruvate. Post-translationally, is synthesized initially as an inactive proenzyme. Formation of the active enzyme involves a self-maturation process in which the active site pyruvoyl group is generated from an internal serine residue via an autocatalytic post-translational modification. Two non-identical subunits are generated from the proenzyme in this reaction, and the pyruvate is formed at the N-terminus of the alpha chain, which is derived from the carboxyl end of the proenzyme. The post-translation cleavage follows an unusual pathway, termed non-hydrolytic serinolysis, in which the side chain hydroxyl group of the serine supplies its oxygen atom to form the C-terminus of the beta chain, while the remainder of the serine residue undergoes an oxidative deamination to produce ammonia and the pyruvoyl prosthetic group on the alpha chain.

The protein resides in the cell membrane. It carries out the reaction archaetidylserine + H(+) = archaetidylethanolamine + CO2. Its function is as follows. Catalyzes the formation of archaetidylethanolamine (PtdEtn) from archaetidylserine (PtdSer). The protein is Putative archaetidylserine decarboxylase proenzyme of Methanocaldococcus jannaschii (strain ATCC 43067 / DSM 2661 / JAL-1 / JCM 10045 / NBRC 100440) (Methanococcus jannaschii).